The sequence spans 196 residues: Histone H1.0-B (196 aa).

2 disordered regions span residues 1–29 (MAEN…PKYS) and 86–196 (GVGA…GRKK). Residues 24-97 (DHPKYSDMIL…GASGSFRLAK (74 aa)) form the H15 domain. The span at 104–196 (PAKKPKKEIK…ASPKKSGRKK (93 aa)) shows a compositional bias: basic residues.

It belongs to the histone H1/H5 family.

It localises to the nucleus. The protein resides in the chromosome. Functionally, histones H1 are necessary for the condensation of nucleosome chains into higher-order structures. The histones H1.0 are found in cells that are in terminal stages of differentiation or that have low rates of cell division. This Xenopus laevis (African clawed frog) protein is Histone H1.0-B (h1-0-b).